The following is a 330-amino-acid chain: Diacylglycerol acyltransferase/mycolyltransferase Ag85B (330 aa).

The N-terminal stretch at 1–40 (MTDLSKKVRAWGRRLLVGTAAAVTLPGLIGLAGGAPTAGA) is a signal peptide. 82 to 83 (LR) contributes to the substrate binding site. Residues 98–108 (FEWYYQSGLSI) are fibronectin-binding. A disulfide bond links Cys127 and Cys132. Substrate is bound by residues Ser166 and Asp194. Ser166 (nucleophile) is an active-site residue. The active site involves Glu270. Substrate is bound by residues 272–275 (FVRS), Lys279, and 302–304 (HSW). His302 is an active-site residue.

Belongs to the mycobacterial A85 antigen family.

The protein resides in the secreted. The enzyme catalyses 2 alpha,alpha'-trehalose 6-mycolate = alpha,alpha'-trehalose 6,6'-bismycolate + alpha,alpha-trehalose. The catalysed reaction is an acyl-CoA + a 1,2-diacyl-sn-glycerol = a triacyl-sn-glycerol + CoA. Its function is as follows. The antigen 85 proteins (FbpA, FbpB, FbpC) are responsible for the high affinity of mycobacteria for fibronectin, a large adhesive glycoprotein, which facilitates the attachment of M.tuberculosis to murine alveolar macrophages (AMs). They also help to maintain the integrity of the cell wall by catalyzing the transfer of mycolic acids to cell wall arabinogalactan and through the synthesis of alpha,alpha-trehalose dimycolate (TDM, cord factor). They catalyze the transfer of a mycoloyl residue from one molecule of alpha,alpha-trehalose monomycolate (TMM) to another TMM, leading to the formation of TDM. In Mycobacterium scrofulaceum, this protein is Diacylglycerol acyltransferase/mycolyltransferase Ag85B (fbpB).